Here is a 196-residue protein sequence, read N- to C-terminus: uncharacterized protein (196 aa).

This is an uncharacterized protein from Mycoplasma genitalium (strain ATCC 33530 / DSM 19775 / NCTC 10195 / G37) (Mycoplasmoides genitalium).